Consider the following 274-residue polypeptide: Phloretin hydrolase (274 aa).

Zn(2+) is bound by residues histidine 123, glutamate 154, histidine 251, and glutamate 255.

It belongs to the DAPG/phloretin hydrolase family. Homodimer. Zn(2+) is required as a cofactor.

The protein resides in the cytoplasm. The catalysed reaction is phloretin + H2O = phloretate + 1,3,5-trihydroxybenzene + H(+). Catalyzes the hydrolytic C-C cleavage of phloretin to phloroglucinol and 3-(4-hydroxyphenyl)propionic acid during flavonoid degradation. Also hydrolyzes other C-acylated phenols. This Eubacterium ramulus protein is Phloretin hydrolase (phy).